The chain runs to 177 residues: Adenine phosphoribosyltransferase (177 aa).

The protein belongs to the purine/pyrimidine phosphoribosyltransferase family. In terms of assembly, homodimer.

It is found in the cytoplasm. The enzyme catalyses AMP + diphosphate = 5-phospho-alpha-D-ribose 1-diphosphate + adenine. The protein operates within purine metabolism; AMP biosynthesis via salvage pathway; AMP from adenine: step 1/1. Catalyzes a salvage reaction resulting in the formation of AMP, that is energically less costly than de novo synthesis. This is Adenine phosphoribosyltransferase from Rhodococcus jostii (strain RHA1).